Reading from the N-terminus, the 95-residue chain is Protein TusB (95 aa).

The protein belongs to the DsrH/TusB family. Heterohexamer, formed by a dimer of trimers. The hexameric TusBCD complex contains 2 copies each of TusB, TusC and TusD. The TusBCD complex interacts with TusE.

It localises to the cytoplasm. Functionally, part of a sulfur-relay system required for 2-thiolation of 5-methylaminomethyl-2-thiouridine (mnm(5)s(2)U) at tRNA wobble positions. The sequence is that of Protein TusB from Serratia proteamaculans (strain 568).